The following is a 386-amino-acid chain: Methionine aminopeptidase 1 (386 aa).

Ala2 bears the N-acetylalanine mark. The C6H2-type zinc finger occupies 6–59; that stretch reads TRVCETDGCSSEAKLQCPTCIKLGIQGSYFCSQECFKGSWATHKLLHKKAKDEK. Zn(2+) is bound by residues Cys9, Cys14, Cys22, Cys25, Cys36, Cys40, His48, and His52. His203 contributes to the a protein binding site. Zn(2+) contacts are provided by Asp220, Asp231, and His294. His301 contacts a protein. Zn(2+) is bound by residues Glu327 and Glu358.

Belongs to the peptidase M24A family. Methionine aminopeptidase type 1 subfamily. In terms of assembly, associates with the 60S ribosomal subunit of the 80S translational complex. Requires Zn(2+) as cofactor. The cofactor is Co(2+). Mn(2+) serves as cofactor. Fe(2+) is required as a cofactor.

The protein localises to the cytoplasm. It carries out the reaction Release of N-terminal amino acids, preferentially methionine, from peptides and arylamides.. In terms of biological role, cotranslationally removes the N-terminal methionine from nascent proteins. The N-terminal methionine is often cleaved when the second residue in the primary sequence is small and uncharged (Met-Ala-, Cys, Gly, Pro, Ser, Thr, or Val). The chain is Methionine aminopeptidase 1 (METAP1) from Pongo abelii (Sumatran orangutan).